The chain runs to 650 residues: 1-deoxy-D-xylulose-5-phosphate synthase (650 aa).

Thiamine diphosphate contacts are provided by residues His-73 and Ser-113–Ala-115. Asp-145 is a Mg(2+) binding site. Thiamine diphosphate-binding positions include Gly-146–Ala-147, Asn-175, Tyr-287, and Glu-369. Asn-175 lines the Mg(2+) pocket. The interval Ser-629–Ala-650 is disordered. Residues Leu-633–Ala-644 show a composition bias toward basic and acidic residues.

Belongs to the transketolase family. DXPS subfamily. Homodimer. It depends on Mg(2+) as a cofactor. Requires thiamine diphosphate as cofactor.

The catalysed reaction is D-glyceraldehyde 3-phosphate + pyruvate + H(+) = 1-deoxy-D-xylulose 5-phosphate + CO2. It functions in the pathway metabolic intermediate biosynthesis; 1-deoxy-D-xylulose 5-phosphate biosynthesis; 1-deoxy-D-xylulose 5-phosphate from D-glyceraldehyde 3-phosphate and pyruvate: step 1/1. Functionally, catalyzes the acyloin condensation reaction between C atoms 2 and 3 of pyruvate and glyceraldehyde 3-phosphate to yield 1-deoxy-D-xylulose-5-phosphate (DXP). This is 1-deoxy-D-xylulose-5-phosphate synthase from Clavibacter sepedonicus (Clavibacter michiganensis subsp. sepedonicus).